We begin with the raw amino-acid sequence, 337 residues long: Peroxisome biogenesis factor 10 (337 aa).

Residues 1 to 24 (MKNDNKLQKEALMRLSQLRFPFAD) are Peroxisomal matrix-facing. A helical transmembrane segment spans residues 25 to 54 (APSIVQAHQKDEQIQGLLIMKVTELCKLIK). Residue Ser-55 is a topological domain, cytoplasmic. The helical transmembrane segment at 56-77 (QLFVNSYPKELSIFAKLLYLLF) threads the bilayer. The Peroxisomal matrix portion of the chain corresponds to 78-105 (TTGRRGRTLGEEYVDLTYTNRKGTRLAG). The helical transmembrane segment at 106–138 (RLKMIVFAFAYPLCPYFITKLYKKIMKNNKESK) threads the bilayer. Residues 139–145 (IEDTESV) lie on the Cytoplasmic side of the membrane. Residues 146-166 (AAFCKGLLDFILDVHMTLFYF) form a helical membrane-spanning segment. Residues 167 to 202 (KGAFYSISKRIFGMRYVFKHILSKNEANFREEGSQK) are Peroxisomal matrix-facing. Residues 203-222 (YKVLGYILLAQNVMKWYPVL) form a helical membrane-spanning segment. Residues 223 to 337 (TSTLGSWIYG…QPQEILVLRQ (115 aa)) are Cytoplasmic-facing. Zn(2+)-binding residues include Cys-286, Cys-289, Cys-301, His-303, Cys-306, Cys-309, Cys-320, and Cys-323. The segment at 286-327 (CILCLMNMSDPSCAPCGHLFCWSCLMSWCKERPECPLCRQHC) adopts an RING-type zinc-finger fold.

It belongs to the pex2/pex10/pex12 family. In terms of assembly, component of the PEX2-PEX10-PEX12 retrotranslocation channel, composed of PEX2, PEX10 and PEX12.

It is found in the peroxisome membrane. The catalysed reaction is S-ubiquitinyl-[E2 ubiquitin-conjugating enzyme]-L-cysteine + [acceptor protein]-L-lysine = [E2 ubiquitin-conjugating enzyme]-L-cysteine + N(6)-ubiquitinyl-[acceptor protein]-L-lysine.. Its pathway is protein modification; protein ubiquitination. The E3 ubiquitin-protein ligase activity is stimulated by PEX12. Its function is as follows. E3 ubiquitin-protein ligase component of a retrotranslocation channel required for peroxisome organization by mediating export of the PEX5 receptor from peroxisomes to the cytosol, thereby promoting PEX5 recycling. The retrotranslocation channel is composed of PEX2, PEX10 and PEX12; each subunit contributing transmembrane segments that coassemble into an open channel that specifically allows the passage of PEX5 through the peroxisomal membrane. PEX10 also regulates PEX5 recycling by acting as a E3 ubiquitin-protein ligase. When PEX5 recycling is compromised, PEX10 catalyzes polyubiquitination of PEX5 during its passage through the retrotranslocation channel, leading to its degradation. This is Peroxisome biogenesis factor 10 from Saccharomyces cerevisiae (strain ATCC 204508 / S288c) (Baker's yeast).